A 302-amino-acid chain; its full sequence is MRIVLITGISGSGKSVALNALEDAGYYCVDNLPPHVLPELARYLAQDGQRRLAVAIDARSSASLDEMPGLIRELSREHDVRVLFLNASTQALIQRFSETRRRHPLSGSRSHDADVGLLSSLEEAIERERELVAPLAEFGHQIDTSTLRANALRTWVKRFIEQKNNDLMVMFESFGFKRGVPLDADLMFDVRALPNPYYDHQLRPLTGLDQPVIAFLDALPIVHQMIDDIHAFLMKWLPHFRDDNRSYLTVAIGCTGGQHRSVFIAETLAARLARDANVIVRHRDAPVDVDASSRLVSEVDRP.

8 to 15 (GISGSGKS) is a binding site for ATP. 57 to 60 (DARS) provides a ligand contact to GTP.

Belongs to the RapZ-like family.

Its function is as follows. Displays ATPase and GTPase activities. This chain is Nucleotide-binding protein Bcenmc03_2806, found in Burkholderia orbicola (strain MC0-3).